Reading from the N-terminus, the 193-residue chain is MKFFIFTCLLAVVLAKHEMDQGSSSEESINVSQQKFKQVKKVAIHPSKEDICSTFCEEAVRNIKEVESAEVPTENKISQFYQKWKFLQYLQALHQGQIVMNPWDQGKTRAYPFIPTVNTEQLSISEESTEVPTEESTEVFTKKTELTEEEKDHQKFLNKIYQYYQTFLWPEYLKTVYQYQKTMTPWNHIKRYF.

The N-terminal stretch at 1–15 is a signal peptide; it reads MKFFIFTCLLAVVLA. 10 positions are modified to phosphoserine: Ser23, Ser24, Ser25, Ser28, Ser47, Ser68, Ser123, Ser125, Ser128, and Ser136.

It belongs to the alpha-casein family. Mammary gland specific. Secreted in milk.

The protein resides in the secreted. In terms of biological role, important role in the capacity of milk to transport calcium phosphate. The sequence is that of Alpha-S2-casein (CSN1S2) from Camelus dromedarius (Dromedary).